Here is a 362-residue protein sequence, read N- to C-terminus: Zinc transporter 9 (362 aa).

Positions 1–21 (MAFDLKLTACLLLAVFSLAAA) are cleaved as a signal peptide. At 22–42 (ADCECQPSDEGHDAAKSRTLK) the chain is on the extracellular side. Residues 43–63 (VIAIFCILVGSSAGCAIPSLG) traverse the membrane as a helical segment. Topologically, residues 64 to 74 (RRFPALRPDTS) are cytoplasmic. A helical transmembrane segment spans residues 75 to 95 (LFFALKAFAAGVILATAFVHI). The Extracellular segment spans residues 96-120 (LPVSFDKLGSPCLVDGPWRKYPFTG). The helical transmembrane segment at 121–141 (LVAMLAAVATLLLDTIATGYF) threads the bilayer. Topologically, residues 142-207 (LQRAQDSRGA…EDRAKLVRHR (66 aa)) are cytoplasmic. Residues 208–228 (VISQVFELGIIVHSIIIGISL) form a helical membrane-spanning segment. At 229–239 (GASESPSTIRP) the chain is on the extracellular side. A helical transmembrane segment spans residues 240–260 (LVAALTFHQFFEGIGLGGCIV). The Cytoplasmic segment spans residues 261–269 (QARFHLKSA). A helical membrane pass occupies residues 270–290 (VTMAIFFSLTTPVGIMIGIGI). Over 291 to 301 (SSAYNENSPTA) the chain is Extracellular. The chain crosses the membrane as a helical span at residues 302-322 (LIVEGILDAAAAGILNYMALV). Residues 323 to 341 (DLLAEDFMNPRVRKSGRLQ) lie on the Cytoplasmic side of the membrane. A helical membrane pass occupies residues 342–362 (LIISILLLVGIALMSLLGIWA).

The protein belongs to the ZIP transporter (TC 2.A.5) family.

Its subcellular location is the cell membrane. Its function is as follows. Zinc transporter that may be involved in zinc uptake from the rhizosphere. The polypeptide is Zinc transporter 9 (ZIP9) (Oryza sativa subsp. japonica (Rice)).